Reading from the N-terminus, the 843-residue chain is Ribosome biogenesis protein ERB1 (843 aa).

Disordered regions lie at residues 36–189 (KKAA…RYIY) and 364–419 (ADES…REYL). Composition is skewed to acidic residues over residues 77-92 (VDED…YDLE), 106-139 (SDSE…EVPS), and 163-172 (ESNDLSDDNE). The span at 173–183 (PNYRIEKDANG) shows a compositional bias: basic and acidic residues. Residues 379–396 (PKLPPPGYEESYHPPPEY) show a composition bias toward pro residues. Over residues 397 to 406 (LPDKKEKEEW) the composition is skewed to basic and acidic residues. WD repeat units follow at residues 487-526 (GHRG…QLWS), 530-570 (SDED…LELE), 668-706 (KGGG…LVKI), 709-754 (PGAR…RPYK), 758-797 (YHQK…DLLS), and 813-843 (TGDL…RLWM).

The protein belongs to the WD repeat BOP1/ERB1 family. Component of the NOP7 complex, composed of ERB1, NOP7 and YTM1. The complex is held together by ERB1, which interacts with NOP7 via its N-terminal domain and with YTM1 via a high-affinity interaction between the seven-bladed beta-propeller domains of the 2 proteins. The NOP7 complex associates with the 66S pre-ribosome.

Its subcellular location is the nucleus. It localises to the nucleolus. The protein localises to the nucleoplasm. Component of the NOP7 complex, which is required for maturation of the 25S and 5.8S ribosomal RNAs and formation of the 60S ribosome. This chain is Ribosome biogenesis protein ERB1, found in Coccidioides immitis (strain RS) (Valley fever fungus).